Reading from the N-terminus, the 641-residue chain is Chaperone protein DnaK 2 (641 aa).

At T199 the chain carries Phosphothreonine; by autocatalysis. The segment covering 601 to 616 has biased composition (low complexity); that stretch reads MAQQQAQAQHAQSSQQ. Positions 601 to 641 are disordered; that stretch reads MAQQQAQAQHAQSSQQTNDTTGQSSTDDDVFEAEFEEVKDK. Acidic residues predominate over residues 626–635; it reads TDDDVFEAEF.

This sequence belongs to the heat shock protein 70 family.

In terms of biological role, acts as a chaperone. In Photobacterium profundum (strain SS9), this protein is Chaperone protein DnaK 2.